Consider the following 289-residue polypeptide: MPPNITALNTTRARTYVFRLPLFTRVVIIAIVGFWLAGLQSIVDIQQWGALIPDEMGLATLYRMNTFPFIHLNIFHAVMNILALTPLMERFEAEYGTLNCLALFFGPLTTIPAFLYIGLEKFVFGNNVAVMGASMWVFLLLGVEAVKTYKVNPNFVIGTYSIPTWTTPIGVLFAMAVLVPSSSFWGHAAGLVIGYGGMFSSTLNKKEKRQCADVKGVAGLGYVKFLAPPEKILRWIEGKLNLLGRLPHYVSIDQKTYGRFGVLPSNNTPAAASPGVALGLVGSTQRLGP.

Helical transmembrane passes span 26–46 (VVII…VDIQ), 67–87 (FPFI…LTPL), 100–120 (CLAL…IGLE), 122–142 (FVFG…LLLG), 157–179 (IGTY…AVLV), and 184–203 (FWGH…SSTL). Catalysis depends on Ser-134, which acts as the Nucleophile. Residue His-187 is part of the active site.

It belongs to the peptidase S54 family.

Its subcellular location is the golgi apparatus membrane. The protein resides in the golgi apparatus. The protein localises to the cis-Golgi network membrane. It carries out the reaction Cleaves type-1 transmembrane domains using a catalytic dyad composed of serine and histidine that are contributed by different transmembrane domains.. Probable rhomboid-type serine protease that catalyzes intramembrane proteolysis. The polypeptide is Rhomboid-type serine protease 2 (RBD2) (Podospora anserina (Pleurage anserina)).